The primary structure comprises 733 residues: MTDDSTCPVTGGADKQVTGRGQSYRDWWPNQPNLRVLSQHSPRSNPMGGEFNYAEEFKKLDFAAVKADLRALMTSSQEWWPADFGHYGPLFIRMAWHSAGTYRTLDGRGGAGSGQQRFPPLNSWPDNVNLDKARRLLWPIKKKYGRKISWADLMILAGNVALESMGFETFGFAGGRVDTWEPDEDVYWGSENTWLGDKRYSGDRKLENPLAAVQMGLIYVNPEGPNGKPDPVAAAKDIRETFARMAMNDEETVALIAGGHSFGKTHGAGPASHVGPEPEAAPIEQQGLGWKSSFGTGKGGDAIGSGLEVTWTSTPTKWSNNFFRILFSYEWELTKSPAGAYQWQPKDGAGAGTIPDAHDKNKRRAPTMLTTDLSLRFDPVYEKISRHFYENPDQLADAFARAWFKLTHRDMGPRTRYLGPEVPKEALIWQDPIPAVNHTLIGPREITFLKRKILASGLSIPELVLTAWASASTFRGSDKRGGANGARIRLAPQKDWEVNEPARLRKVLAVLEGIQQEFNKTATGGKKVSLADLIVLAGCAGVWKAAKNGGHKVTVPFTPGRMDATQEQTDVNSFAVLEPKADGFRNYLKGPYAVSAEELLVDKAQLLTLSAPEMTVLIGGLRVIGATYGQATHGVFTTLPGALTNDFFTHLLDMGTEWKPVAGNPDVFEGSDRKTGEPKWTGTRVDLIFGANAQLRAIAEVYASADGEEKFAQDFVAAWAKVMNLDRFDLAQK.

The tract at residues 1 to 24 (MTDDSTCPVTGGADKQVTGRGQSY) is disordered. Positions 96 to 219 (WHSAGTYRTL…LAAVQMGLIY (124 aa)) form a cross-link, tryptophyl-tyrosyl-methioninium (Trp-Tyr) (with M-245). The active-site Proton acceptor is the His-97. Positions 219 to 245 (YVNPEGPNGKPDPVAAAKDIRETFARM) form a cross-link, tryptophyl-tyrosyl-methioninium (Tyr-Met) (with W-96). His-260 is a heme b binding site.

The protein belongs to the peroxidase family. Peroxidase/catalase subfamily. Homodimer or homotetramer. Heme b serves as cofactor. Post-translationally, formation of the three residue Trp-Tyr-Met cross-link is important for the catalase, but not the peroxidase activity of the enzyme.

It catalyses the reaction H2O2 + AH2 = A + 2 H2O. The enzyme catalyses 2 H2O2 = O2 + 2 H2O. Bifunctional enzyme with both catalase and broad-spectrum peroxidase activity. In Methanoregula boonei (strain DSM 21154 / JCM 14090 / 6A8), this protein is Catalase-peroxidase.